The primary structure comprises 265 residues: UDP-N-acetylenolpyruvoylglucosamine reductase (265 aa).

Residues 15–169 enclose the FAD-binding PCMH-type domain; the sequence is GVGGPAELWT…TRVRLKLKER (155 aa). R149 is an active-site residue. A disordered region spans residues 182–203; that stretch reads DRARKGQPKRKSAGCAFKNPPG. The Proton donor role is filled by C196.

The protein belongs to the MurB family. Requires FAD as cofactor.

The protein resides in the cytoplasm. The catalysed reaction is UDP-N-acetyl-alpha-D-muramate + NADP(+) = UDP-N-acetyl-3-O-(1-carboxyvinyl)-alpha-D-glucosamine + NADPH + H(+). It participates in cell wall biogenesis; peptidoglycan biosynthesis. Cell wall formation. The polypeptide is UDP-N-acetylenolpyruvoylglucosamine reductase (Thermus thermophilus (strain ATCC 27634 / DSM 579 / HB8)).